The chain runs to 600 residues: Elongation factor 4 (600 aa).

The region spanning 5-187 (KYIRNFSIVA…EIVEKVPAPE (183 aa)) is the tr-type G domain. GTP-binding positions include 17 to 22 (DHGKST) and 134 to 137 (NKVD).

Belongs to the TRAFAC class translation factor GTPase superfamily. Classic translation factor GTPase family. LepA subfamily.

The protein resides in the cell membrane. The catalysed reaction is GTP + H2O = GDP + phosphate + H(+). Required for accurate and efficient protein synthesis under certain stress conditions. May act as a fidelity factor of the translation reaction, by catalyzing a one-codon backward translocation of tRNAs on improperly translocated ribosomes. Back-translocation proceeds from a post-translocation (POST) complex to a pre-translocation (PRE) complex, thus giving elongation factor G a second chance to translocate the tRNAs correctly. Binds to ribosomes in a GTP-dependent manner. The sequence is that of Elongation factor 4 from Clostridium perfringens (strain ATCC 13124 / DSM 756 / JCM 1290 / NCIMB 6125 / NCTC 8237 / Type A).